A 390-amino-acid polypeptide reads, in one-letter code: O-phospho-L-seryl-tRNA:Cys-tRNA synthase 2 (390 aa).

Pyridoxal 5'-phosphate is bound by residues 83–84 (AR), N187, and 210–212 (SGH). K213 carries the N6-(pyridoxal phosphate)lysine modification.

The protein belongs to the SepCysS family. Homodimer. Interacts with SepRS. The cofactor is pyridoxal 5'-phosphate.

It carries out the reaction O-phospho-L-seryl-tRNA(Cys) + hydrogen sulfide + H(+) = L-cysteinyl-tRNA(Cys) + phosphate. Functionally, converts O-phospho-L-seryl-tRNA(Cys) (Sep-tRNA(Cys)) to L-cysteinyl-tRNA(Cys) (Cys-tRNA(Cys)). This chain is O-phospho-L-seryl-tRNA:Cys-tRNA synthase 2, found in Archaeoglobus fulgidus (strain ATCC 49558 / DSM 4304 / JCM 9628 / NBRC 100126 / VC-16).